A 194-amino-acid polypeptide reads, in one-letter code: Early growth response protein 1 (194 aa).

C2H2-type zinc fingers lie at residues 1-18, 24-46, and 52-74; these read CDRR…IRIH, FQCR…IRTH, and FACD…TKIH. The interval 66-88 is disordered; it reads ERKRHTKIHLRQKDKKVEKAASV. The segment covering 69-79 has biased composition (basic residues); the sequence is RHTKIHLRQKD.

It belongs to the EGR C2H2-type zinc-finger protein family.

It localises to the nucleus. It is found in the cytoplasm. Functionally, transcriptional regulator. Recognizes and binds to the DNA sequence 5'-GCG(T/G)GGGCG-3'(EGR-site) in the promoter region of target genes. Binds double-stranded target DNA, irrespective of the cytosine methylation status. Regulates the transcription of numerous target genes, and thereby plays an important role in regulating the response to growth factors, DNA damage, and ischemia. Plays a role in the regulation of cell survival, proliferation and cell death. Mediates responses to ischemia and hypoxia; regulates the expression of proteins that are involved in inflammatory processes. Plays a role in regulating the expression of circadian clock genes. This is Early growth response protein 1 (EGR1) from Coturnix japonica (Japanese quail).